Consider the following 415-residue polypeptide: Glutamyl-tRNA reductase (415 aa).

Substrate is bound by residues 49-52 (TCNR), Ser104, 109-111 (EPQ), and Gln115. Catalysis depends on Cys50, which acts as the Nucleophile. Residue 184-189 (GAGEMI) participates in NADP(+) binding.

This sequence belongs to the glutamyl-tRNA reductase family. As to quaternary structure, homodimer.

The enzyme catalyses (S)-4-amino-5-oxopentanoate + tRNA(Glu) + NADP(+) = L-glutamyl-tRNA(Glu) + NADPH + H(+). It participates in porphyrin-containing compound metabolism; protoporphyrin-IX biosynthesis; 5-aminolevulinate from L-glutamyl-tRNA(Glu): step 1/2. Functionally, catalyzes the NADPH-dependent reduction of glutamyl-tRNA(Glu) to glutamate 1-semialdehyde (GSA). This is Glutamyl-tRNA reductase from Neisseria meningitidis serogroup C (strain 053442).